We begin with the raw amino-acid sequence, 1040 residues long: Multidrug resistance protein MdtB (1040 aa).

Helical transmembrane passes span 25–45 (LLMVAILLAGIIGYRFLPVAA), 342–362 (DTQFELMLAIALVVMIIYLFL), 369–389 (IIPGVAVPLSLIGTFAVMVFL), 396–416 (LTLMALTIATGFVVDDAIVVI), 440–460 (IGFTIISLTFSLIAVLIPLLF), 472–492 (FAVTLAVAILISAVVSLTLTP), 537–557 (WLTLSVALGTLLLSIMLWVFI), 863–883 (LGSTVWLIVAAVVAMYIVLGV), 888–908 (FIHPITILSTLPTAGVGALLA), 911–931 (IAGSELDVIAIIGIILLIGIV), 967–987 (PILMTTLAALLGALPLMLSTG), and 998–1018 (IGMVGGLLVSQVLTLFTTPVI).

Belongs to the resistance-nodulation-cell division (RND) (TC 2.A.6) family. MdtB subfamily. Part of a tripartite efflux system composed of MdtA, MdtB and MdtC. MdtB forms a heteromultimer with MdtC.

It localises to the cell inner membrane. In Citrobacter koseri (strain ATCC BAA-895 / CDC 4225-83 / SGSC4696), this protein is Multidrug resistance protein MdtB.